Consider the following 514-residue polypeptide: Maturase K (514 aa).

This sequence belongs to the intron maturase 2 family. MatK subfamily.

It localises to the plastid. It is found in the chloroplast. Its function is as follows. Usually encoded in the trnK tRNA gene intron. Probably assists in splicing its own and other chloroplast group II introns. The protein is Maturase K of Plantago argentea (Silver plantain).